The chain runs to 244 residues: MVQNKTTGSCPKPTEVAPGGPSWCKTSNGHIKRPMNAFMVWSQIERRKLMSLCPNMHNADISRSLGQRWKLLQDTDKIPYVREAERLRLKHMADYPNYKYRPRRRSRTQESKTRARLPRSTATCQSVPSPCLSQMDTGSSMQWGETCPAWGGDQVGQSVETQIRESSARSPEVPTHTKTVPSSPQSAEEHEGLEGGSLVIPVDKEVPPHSGSHFEFPDHCTPEVMEMISGSGLLESVPDLVFSY.

The tract at residues 1-22 is disordered; it reads MVQNKTTGSCPKPTEVAPGGPS. The HMG box DNA-binding region spans 31-99; the sequence is IKRPMNAFMV…KHMADYPNYK (69 aa). Disordered regions lie at residues 101 to 137 and 152 to 193; these read RPRR…QMDT and GDQV…HEGL. Composition is skewed to polar residues over residues 120–137 and 176–186; these read STAT…QMDT and HTKTVPSSPQS.

As to expression, expressed at a low level in embryos, and in the adult lung, ovary, skeletal muscle, testis, brain and heart.

Its subcellular location is the nucleus. Functionally, transcription factor that binds to the sequence 5'-AACAAT-3'. Acts as a transcriptional activator. This Xenopus laevis (African clawed frog) protein is Transcription factor Sox-12 (sox12).